Consider the following 346-residue polypeptide: MQALVGAETGGYRLADNVEKPVLQPGSILCHVKAVALNPHDAKIVDYSNVPGALGGCDFAGVVVEIGNGVKRFKEGDRVFAVTFGMNASDKTAGAFTQYAVATEDLSCLIPEAMSFTEACSMGLAIATAGLALFQTPGLQLSMQGGNGEAVLVSGGATATGTMAIQFLRIAGYTPVVTCSPSNNALCESFGAEICFDYHSPTCGADIRVQTGNKLRHVLDCVVDISTMKMSYDAIGSSGGAYVALEAIPTNIKYTRRDICANWLMAPSILGTPVNKKGAYGRPSMPEHRQFGTYLFALAEKWLQDGSIKHHPIEIREGGLRSIREGIDDLRRGNVHAKKLVYPLSA.

Position 40 to 43 (40 to 43 (HDAK)) interacts with NADP(+). 124–131 (LAIATAGL) provides a ligand contact to substrate. Residues 157 to 160 (ATAT), 180 to 183 (SPSN), Tyr198, and 245 to 246 (LE) contribute to the NADP(+) site. 266 to 270 (APSIL) serves as a coordination point for substrate. NADP(+) is bound at residue 335-336 (VH).

The protein belongs to the zinc-containing alcohol dehydrogenase family.

Its function is as follows. Trans-enoyl reductase; part of the gene cluster that mediates the biosynthesis of fujikurins A-D, secondary metabolites playing a role during rice infection. The polyketide synthase PKS19 acts with the trans-enoyl reductase FFUJ_12240 and the polyketide transferase FFUJ_12241 to produce fujikurins, however, the biosynthesis pathway has not been identified yet. This is Trans-enoyl reductase FFUJ_12240 from Gibberella fujikuroi (strain CBS 195.34 / IMI 58289 / NRRL A-6831) (Bakanae and foot rot disease fungus).